The chain runs to 239 residues: Caffeoyl-CoA O-methyltransferase 1 (239 aa).

Lys13 serves as a coordination point for substrate. S-adenosyl-L-methionine-binding positions include Thr55, Glu77, 79-80 (GV), Ser85, Asp103, and Ala132. Asp155 is a substrate binding site. Asp155 is an a divalent metal cation binding site. Asp157 contacts S-adenosyl-L-methionine. The a divalent metal cation site is built by Asp181 and Asn182. Residue Asn186 coordinates substrate.

Belongs to the class I-like SAM-binding methyltransferase superfamily. Cation-dependent O-methyltransferase family. CCoAMT subfamily. Monomer. Mg(2+) serves as cofactor. In terms of tissue distribution, mostly expressed in the bottom and middle parts of the stems.

It carries out the reaction (E)-caffeoyl-CoA + S-adenosyl-L-methionine = (E)-feruloyl-CoA + S-adenosyl-L-homocysteine + H(+). The protein operates within aromatic compound metabolism; phenylpropanoid biosynthesis. Functionally, methylates caffeoyl-CoA to feruloyl-CoA and 5-hydroxyferuloyl-CoA to sinapoyl-CoA. Plays a role in the synthesis of feruloylated polysaccharides. Involved in the reinforcement of the plant cell wall. Also involved in the responding to wounding or pathogen challenge by the increased formation of cell wall-bound ferulic acid polymers. In Nicotiana tabacum (Common tobacco), this protein is Caffeoyl-CoA O-methyltransferase 1 (CCOAOMT1).